An 86-amino-acid polypeptide reads, in one-letter code: Small ribosomal subunit protein uS17 (86 aa).

Belongs to the universal ribosomal protein uS17 family. As to quaternary structure, part of the 30S ribosomal subunit.

Its function is as follows. One of the primary rRNA binding proteins, it binds specifically to the 5'-end of 16S ribosomal RNA. This Roseiflexus castenholzii (strain DSM 13941 / HLO8) protein is Small ribosomal subunit protein uS17.